A 179-amino-acid chain; its full sequence is Large ribosomal subunit protein uL5 (179 aa).

It belongs to the universal ribosomal protein uL5 family. As to quaternary structure, part of the 50S ribosomal subunit; part of the 5S rRNA/L5/L18/L25 subcomplex. Contacts the 5S rRNA and the P site tRNA. Forms a bridge to the 30S subunit in the 70S ribosome.

This is one of the proteins that bind and probably mediate the attachment of the 5S RNA into the large ribosomal subunit, where it forms part of the central protuberance. In the 70S ribosome it contacts protein S13 of the 30S subunit (bridge B1b), connecting the 2 subunits; this bridge is implicated in subunit movement. Contacts the P site tRNA; the 5S rRNA and some of its associated proteins might help stabilize positioning of ribosome-bound tRNAs. The polypeptide is Large ribosomal subunit protein uL5 (Buchnera aphidicola subsp. Baizongia pistaciae (strain Bp)).